Consider the following 149-residue polypeptide: Ribonuclease pancreatic (149 aa).

Residues 1 to 25 (MGLENSLILFSLLVLVLGWVQPSLG) form the signal peptide. Residues 25-62 (GKESSPDKFKRQHMDTEGSSKSSPTYCNQMRSPQEMTK) form a disordered region. Positions 28-42 (SSPDKFKRQHMDTEG) are enriched in basic and acidic residues. Substrate is bound by residues Lys32 and Arg35. Residue His37 is the Proton acceptor of the active site. Polar residues predominate over residues 43–61 (SSKSSPTYCNQMRSPQEMT). Cystine bridges form between Cys51–Cys109, Cys65–Cys120, Cys83–Cys135, and Cys90–Cys97. Residues 66–70 (KPVNT) and Lys91 contribute to the substrate site. His144 functions as the Proton donor in the catalytic mechanism.

Belongs to the pancreatic ribonuclease family. Monomer. Interacts with and forms tight 1:1 complexes with RNH1. Dimerization of two such complexes may occur. Interaction with RNH1 inhibits this protein.

It localises to the secreted. It catalyses the reaction an [RNA] containing cytidine + H2O = an [RNA]-3'-cytidine-3'-phosphate + a 5'-hydroxy-ribonucleotide-3'-[RNA].. It carries out the reaction an [RNA] containing uridine + H2O = an [RNA]-3'-uridine-3'-phosphate + a 5'-hydroxy-ribonucleotide-3'-[RNA].. Endonuclease that catalyzes the cleavage of RNA on the 3' side of pyrimidine nucleotides. Acts on single-stranded and double-stranded RNA. This Sundamys muelleri (Mueller's giant sunda rat) protein is Ribonuclease pancreatic (RNASE1).